A 522-amino-acid chain; its full sequence is Peptide chain release factor 3 (522 aa).

In terms of domain architecture, tr-type G spans 10–277 (ASRKTFAIIS…TFVDFAPSPS (268 aa)). GTP is bound by residues 19–26 (SHPDAGKT), 87–91 (DTPGH), and 141–144 (NKMD).

The protein belongs to the TRAFAC class translation factor GTPase superfamily. Classic translation factor GTPase family. PrfC subfamily.

It is found in the cytoplasm. Functionally, increases the formation of ribosomal termination complexes and stimulates activities of RF-1 and RF-2. It binds guanine nucleotides and has strong preference for UGA stop codons. It may interact directly with the ribosome. The stimulation of RF-1 and RF-2 is significantly reduced by GTP and GDP, but not by GMP. This is Peptide chain release factor 3 from Listeria innocua serovar 6a (strain ATCC BAA-680 / CLIP 11262).